The following is a 171-amino-acid chain: MTAILITGYRSFEIGIFDHKDPRVSIIKQAIRKDLIGYLENGVDWFIFTGNLGFEQWALEVANELKEEYPLQIATIFLFETHGDKWNEKNQEVLSQFRAVDFVKYYFPNYEQPTQFSQYYQFLLEKTEGAYVFYDTENETNLKYFLKKAKDMPYYQLLLLTFDRLNDMSQS.

The protein belongs to the UPF0398 family.

This chain is UPF0398 protein MGAS10270_Spy1470, found in Streptococcus pyogenes serotype M2 (strain MGAS10270).